A 730-amino-acid chain; its full sequence is MEEKKCPVTGHTQHTPTGGGTKNKDWWPNQLNLNILHQNSALGNPMDPDFNYAEEFKKLDLAAVKKDLYALMTDSQDWWPADYGHYGPLFIRMAWHSAGTYRLNDGRGGAGDGTQRFAPLNSWPDNVNLDKARRLLWPIKQKYGKKISWADLMVLAGNCALESMGFKTFGFAGGREDVWEPQEDIYWGSEGEWLGDQRYSGDRDLENPLAAVQMGLIYVNPEGPNGQPSVLASGRDVRDTFKRMAMNDEETVALVAGGHTFGKCHGAGPASHVGPEPEAAPLEEQGLGWKSTFRSGKGGDTIGSGIEGAWKPNPTTWDMGYLETLFKYDWDLVKSPAGAWQWVPTDPAAADTVQDAHDPAKRHAPMMTTADLSLRMDPIFGPIAKRFRDNPEEFADAFARAWFKLTHRDMGPRSRYLGPEVPEEELIWQDPVPPVDHELIDEQDIADLKAKLLASGLSVSQLVSTAWASASTFRGSDKRGGANGARIRLAPQKDWEINQPAQLAEVLAALEGIQTEFNSSQSGTKKVSLADLIVLGGAAAIEQAARNAGHTLVLPFTPGRTDATQEQTEIYSFAVMEPKADGFRNYLKGKSSAPAEEMLVDRAQLLTLTAPEMTVLLGGLRVLNANYGQSKHGVFTQRPETLTNDFFVNLLDMGTEWKAVSEEKALYEGRDRATGELKWTGTRVDLVFGSNSQLRALAEVYACSDSQDKFLQDFVSAWNKVMNADRFDLA.

The disordered stretch occupies residues 1–25 (MEEKKCPVTGHTQHTPTGGGTKNKD). Residues 95–218 (WHSAGTYRLN…LAAVQMGLIY (124 aa)) constitute a cross-link (tryptophyl-tyrosyl-methioninium (Trp-Tyr) (with M-244)). The Proton acceptor role is filled by His96. A cross-link (tryptophyl-tyrosyl-methioninium (Tyr-Met) (with W-95)) is located at residues 218–244 (YVNPEGPNGQPSVLASGRDVRDTFKRM). Heme b is bound at residue His259.

The protein belongs to the peroxidase family. Peroxidase/catalase subfamily. In terms of assembly, homodimer or homotetramer. Requires heme b as cofactor. Formation of the three residue Trp-Tyr-Met cross-link is important for the catalase, but not the peroxidase activity of the enzyme.

It carries out the reaction H2O2 + AH2 = A + 2 H2O. The enzyme catalyses 2 H2O2 = O2 + 2 H2O. In terms of biological role, bifunctional enzyme with both catalase and broad-spectrum peroxidase activity. In Desulfitobacterium hafniense (strain Y51), this protein is Catalase-peroxidase.